The sequence spans 354 residues: Probable N-acetylmuramoyl-L-alanine amidase (354 aa).

Residues M1 to A39 form the signal peptide. An N-acetylmuramoyl-L-alanine amidase domain is found at L40–T152.

This sequence belongs to the N-acetylmuramoyl-L-alanine amidase 2 family.

The protein resides in the secreted. It catalyses the reaction Hydrolyzes the link between N-acetylmuramoyl residues and L-amino acid residues in certain cell-wall glycopeptides.. This chain is Probable N-acetylmuramoyl-L-alanine amidase, found in Bacillus licheniformis.